Here is a 182-residue protein sequence, read N- to C-terminus: uncharacterized protein (182 aa).

Positions 66-133 (QKRKRREIKV…NLEIETNSDS (68 aa)) form a coiled coil.

This is an uncharacterized protein from Acanthamoeba polyphaga (Amoeba).